The sequence spans 129 residues: RutC family protein PM1466 (129 aa).

This sequence belongs to the RutC family.

The sequence is that of RutC family protein PM1466 from Pasteurella multocida (strain Pm70).